The chain runs to 284 residues: Tropomyosin alpha-1 chain (284 aa).

Residue M1 is modified to N-acetylmethionine. Residues 1–40 form a disordered region; it reads MDAIKKKMQMLKLDKENALDRAEQAESDKKASEDRSKQLE. Positions 1–284 form a coiled coil; that stretch reads MDAIKKKMQM…DHALNDMTSI (284 aa). Positions 12-40 are enriched in basic and acidic residues; that stretch reads KLDKENALDRAEQAESDKKASEDRSKQLE.

In terms of assembly, homodimer. Heterodimer of an alpha (TPM1, TPM3 or TPM4) and a beta (TPM2) chain.

Its subcellular location is the cytoplasm. It is found in the cytoskeleton. In terms of biological role, binds to actin filaments in muscle and non-muscle cells. Plays a central role, in association with the troponin complex, in the calcium dependent regulation of vertebrate striated muscle contraction. Smooth muscle contraction is regulated by interaction with caldesmon. In non-muscle cells is implicated in stabilizing cytoskeleton actin filaments. The sequence is that of Tropomyosin alpha-1 chain from Chelon auratus (Golden grey mullet).